A 473-amino-acid chain; its full sequence is Methionine aminopeptidase 2 (473 aa).

Positions 23 to 121 (LAEDSSNGTQ…KLVSIDQSYP (99 aa)) are disordered. The segment covering 41–53 (KATTAVGQDNGNN) has biased composition (polar residues). Acidic residues predominate over residues 73–83 (DDDDDDEDDDV). A compositionally biased stretch (low complexity) spans 84-93 (AAAAAAVGDA). Residues 97 to 113 (KKKKKKKSSNKKKKKKL) are compositionally biased toward basic residues. Substrate is bound at residue His-224. Residues Asp-244, Asp-255, and His-326 each coordinate a divalent metal cation. His-334 lines the substrate pocket. Residues Glu-359 and Glu-454 each contribute to the a divalent metal cation site.

It belongs to the peptidase M24A family. Methionine aminopeptidase eukaryotic type 2 subfamily. It depends on Co(2+) as a cofactor. Requires Zn(2+) as cofactor. Mn(2+) is required as a cofactor. The cofactor is Fe(2+).

The protein localises to the cytoplasm. The catalysed reaction is Release of N-terminal amino acids, preferentially methionine, from peptides and arylamides.. In terms of biological role, cotranslationally removes the N-terminal methionine from nascent proteins. The N-terminal methionine is often cleaved when the second residue in the primary sequence is small and uncharged (Met-Ala-, Cys, Gly, Pro, Ser, Thr, or Val). The polypeptide is Methionine aminopeptidase 2 (Lodderomyces elongisporus (strain ATCC 11503 / CBS 2605 / JCM 1781 / NBRC 1676 / NRRL YB-4239) (Yeast)).